We begin with the raw amino-acid sequence, 181 residues long: Cytochrome c-type biogenesis protein CcmE (181 aa).

Topologically, residues 1 to 8 (MNPRRKSR) are cytoplasmic. The chain crosses the membrane as a helical; Signal-anchor for type II membrane protein span at residues 9–29 (LKVVVSIIFGVAVAAGLTLYA). At 30-181 (LSQNIDLFYT…TLKTLQGEAN (152 aa)) the chain is on the periplasmic side. 2 residues coordinate heme: H131 and Y135. Composition is skewed to basic and acidic residues over residues 135-148 (YMPP…KEQH) and 156-166 (ADLKGTSARDK). The interval 135 to 166 (YMPPELGDKLKEQHGAAGISEADLKGTSARDK) is disordered.

Belongs to the CcmE/CycJ family.

Its subcellular location is the cell inner membrane. In terms of biological role, heme chaperone required for the biogenesis of c-type cytochromes. Transiently binds heme delivered by CcmC and transfers the heme to apo-cytochromes in a process facilitated by CcmF and CcmH. The chain is Cytochrome c-type biogenesis protein CcmE from Actinobacillus pleuropneumoniae serotype 7 (strain AP76).